The following is a 348-amino-acid chain: 3-methyl-2-oxobutanoate dehydrogenase subunit beta (348 aa).

Residues Glu-51, Leu-80–Glu-82, Gln-104, and Phe-108–Pro-111 contribute to the thiamine diphosphate site. Residues Phe-105–Phe-108 and His-151 contribute to the substrate site. His-151 acts as the Proton acceptor in catalysis.

Heteromer of E1 alpha (BkdA) and beta (BkdB) subunits. Part of the BCKADH complex, consisting of multiple copies of BkdA/BkdB (E1), BkdC (E2) and Lpd (E3). It depends on thiamine diphosphate as a cofactor.

The enzyme catalyses N(6)-[(R)-lipoyl]-L-lysyl-[protein] + 3-methyl-2-oxobutanoate + H(+) = N(6)-[(R)-S(8)-2-methylpropanoyldihydrolipoyl]-L-lysyl-[protein] + CO2. In terms of biological role, component of the branched-chain alpha-ketoacid dehydrogenase (BCKADH) complex, that catalyzes the overall conversion of branched-chain alpha-ketoacids to acyl-CoA and CO(2). The protein is 3-methyl-2-oxobutanoate dehydrogenase subunit beta (bkdB) of Mycobacterium tuberculosis (strain CDC 1551 / Oshkosh).